Here is a 100-residue protein sequence, read N- to C-terminus: uncharacterized protein (100 aa).

Residues 1 to 17 (MTMKYFCSVMIAIALVG) form the signal peptide. Residue Cys18 is the site of N-palmitoyl cysteine attachment. A lipid anchor (S-diacylglycerol cysteine) is attached at Cys18.

Its subcellular location is the cell membrane. This is an uncharacterized protein from Salmonella paratyphi A (strain ATCC 9150 / SARB42).